Reading from the N-terminus, the 1034-residue chain is Isoleucine--tRNA ligase (1034 aa).

The 'HIGH' region signature appears at 46–56 (PYCSGAIHLGT). The 'KMSKS' region motif lies at 598–602 (KMSKS). K601 lines the ATP pocket.

Belongs to the class-I aminoacyl-tRNA synthetase family. IleS type 2 subfamily. In terms of assembly, monomer. Zn(2+) is required as a cofactor.

Its subcellular location is the cytoplasm. The catalysed reaction is tRNA(Ile) + L-isoleucine + ATP = L-isoleucyl-tRNA(Ile) + AMP + diphosphate. Functionally, catalyzes the attachment of isoleucine to tRNA(Ile). As IleRS can inadvertently accommodate and process structurally similar amino acids such as valine, to avoid such errors it has two additional distinct tRNA(Ile)-dependent editing activities. One activity is designated as 'pretransfer' editing and involves the hydrolysis of activated Val-AMP. The other activity is designated 'posttransfer' editing and involves deacylation of mischarged Val-tRNA(Ile). The sequence is that of Isoleucine--tRNA ligase from Methanococcus maripaludis (strain DSM 14266 / JCM 13030 / NBRC 101832 / S2 / LL).